The chain runs to 279 residues: Aquaporin A (279 aa).

Topologically, residues 1-40 (MVKVVPLRFITYDPLKDPSKMIYRRPISKPVKAFKGFFSE) are cytoplasmic. A helical transmembrane segment spans residues 41-61 (FLGTLYLVYFCGGSVCAAFAV). Topologically, residues 62–69 (AGDSAARA) are extracellular. A helical transmembrane segment spans residues 70-90 (LLGGLIQGMALAALIWAVSGV). The Cytoplasmic segment spans residues 91–114 (SGCNLNPAVTLANLLSGRVGLIDS). An NPA 1 motif is present at residues 96–98 (NPA). A helical membrane pass occupies residues 115-135 (LYYVAAQILGCIAGAGILYGC). Residues 136–158 (LPNMYRIDLGVPHLAPGMNTGQA) lie on the Extracellular side of the membrane. Residues 159–179 (FLMEMMLTSILCLCVLGTSVF) traverse the membrane as a helical segment. Topologically, residues 180–188 (NVWDRRLNR) are cytoplasmic. The helical transmembrane segment at 189–209 (IAPFAIGLALFIGVAIGFNFS) threads the bilayer. Over 210–227 (GGALNPVRVLGPSIISGV) the chain is Extracellular. An NPA 2 motif is present at residues 214–216 (NPV). A helical transmembrane segment spans residues 228–248 (WSHHWVYWLGPIVGAILAAFI). At 249–279 (YRCLLQERFDVIERPGYIAPLIDPSTAVSSY) the chain is on the cytoplasmic side.

This sequence belongs to the MIP/aquaporin (TC 1.A.8) family.

The protein localises to the cell membrane. In terms of biological role, may form a water-specific channel. Required for prolonged spore survival on fruiting bodies. The sequence is that of Aquaporin A (aqpA) from Dictyostelium discoideum (Social amoeba).